The primary structure comprises 646 residues: ATP-dependent zinc metalloprotease FtsH (646 aa).

The disordered stretch occupies residues 1–27 (MTNNQTDRPRPPGPESRRFDNNDKNNR). The Cytoplasmic portion of the chain corresponds to 1 to 35 (MTNNQTDRPRPPGPESRRFDNNDKNNRNRWGPIPS). The segment covering 7-26 (DRPRPPGPESRRFDNNDKNN) has biased composition (basic and acidic residues). A helical transmembrane segment spans residues 36–56 (WAWIVLIVALLLNWLVAPILF). The Extracellular portion of the chain corresponds to 57-144 (PEGKGAVSIP…QPESSTRSLL (88 aa)). A helical transmembrane segment spans residues 145–165 (LSILISFGPTILFFLLFLWLI). At 166–646 (SKAQSSQQGL…GLGEKQPEPA (481 aa)) the chain is on the cytoplasmic side. ATP is bound at residue 237–244 (GPPGTGKT). His459 serves as a coordination point for Zn(2+). The active site involves Glu460. 2 residues coordinate Zn(2+): His463 and Asp535.

In the central section; belongs to the AAA ATPase family. It in the C-terminal section; belongs to the peptidase M41 family. In terms of assembly, homohexamer. Zn(2+) serves as cofactor.

Its subcellular location is the cell membrane. Acts as a processive, ATP-dependent zinc metallopeptidase for both cytoplasmic and membrane proteins. Plays a role in the quality control of integral membrane proteins. The polypeptide is ATP-dependent zinc metalloprotease FtsH (Thermobaculum terrenum (strain ATCC BAA-798 / CCMEE 7001 / YNP1)).